We begin with the raw amino-acid sequence, 352 residues long: DNA polymerase IV (352 aa).

One can recognise a UmuC domain in the interval 6–187 (IIHIDADCFY…VPVKFISGIG (182 aa)). Residues D10 and D105 each coordinate Mg(2+). E106 is an active-site residue.

This sequence belongs to the DNA polymerase type-Y family. As to quaternary structure, monomer. It depends on Mg(2+) as a cofactor.

The protein resides in the cytoplasm. It carries out the reaction DNA(n) + a 2'-deoxyribonucleoside 5'-triphosphate = DNA(n+1) + diphosphate. Poorly processive, error-prone DNA polymerase involved in untargeted mutagenesis. Copies undamaged DNA at stalled replication forks, which arise in vivo from mismatched or misaligned primer ends. These misaligned primers can be extended by PolIV. Exhibits no 3'-5' exonuclease (proofreading) activity. May be involved in translesional synthesis, in conjunction with the beta clamp from PolIII. The polypeptide is DNA polymerase IV (Marinomonas sp. (strain MWYL1)).